We begin with the raw amino-acid sequence, 360 residues long: Phospho-N-acetylmuramoyl-pentapeptide-transferase (360 aa).

The next 10 helical transmembrane spans lie at Ala-26–Ala-46, Pro-72–Tyr-92, Ser-94–Val-114, Trp-132–Gly-152, Val-168–Gly-188, Gly-199–Thr-219, Ala-236–Phe-256, Val-263–Leu-283, Phe-288–Val-308, and Val-338–Lys-358.

It belongs to the glycosyltransferase 4 family. MraY subfamily. It depends on Mg(2+) as a cofactor.

The protein resides in the cell inner membrane. It catalyses the reaction UDP-N-acetyl-alpha-D-muramoyl-L-alanyl-gamma-D-glutamyl-meso-2,6-diaminopimeloyl-D-alanyl-D-alanine + di-trans,octa-cis-undecaprenyl phosphate = di-trans,octa-cis-undecaprenyl diphospho-N-acetyl-alpha-D-muramoyl-L-alanyl-D-glutamyl-meso-2,6-diaminopimeloyl-D-alanyl-D-alanine + UMP. The protein operates within cell wall biogenesis; peptidoglycan biosynthesis. In terms of biological role, catalyzes the initial step of the lipid cycle reactions in the biosynthesis of the cell wall peptidoglycan: transfers peptidoglycan precursor phospho-MurNAc-pentapeptide from UDP-MurNAc-pentapeptide onto the lipid carrier undecaprenyl phosphate, yielding undecaprenyl-pyrophosphoryl-MurNAc-pentapeptide, known as lipid I. The sequence is that of Phospho-N-acetylmuramoyl-pentapeptide-transferase from Klebsiella pneumoniae subsp. pneumoniae (strain ATCC 700721 / MGH 78578).